A 349-amino-acid polypeptide reads, in one-letter code: GDSL esterase/lipase At1g58525 (349 aa).

Residues 1–19 (MKLQILLLALVLIAVEANA) form the signal peptide. Asn25 is a glycosylation site (N-linked (GlcNAc...) asparagine). The active-site Nucleophile is the Ser37. Asn316 is a glycosylation site (N-linked (GlcNAc...) asparagine). Residues Asp324 and His327 contribute to the active site.

It belongs to the 'GDSL' lipolytic enzyme family.

The protein localises to the secreted. The polypeptide is GDSL esterase/lipase At1g58525 (Arabidopsis thaliana (Mouse-ear cress)).